Reading from the N-terminus, the 204-residue chain is Facilitator of iron transport 3 (204 aa).

The signal sequence occupies residues 1-18 (MKFSSALVLSAVAATALA). 2 disordered regions span residues 84–104 (SAAETSSAAETSSADEGSGSS) and 133–175 (EGSS…SSTA). Residues 135-175 (SSNTWSPSSTSTSSEAATSSASTTATTTAETSSSATSSSTA) show a composition bias toward low complexity. The GPI-anchor amidated glycine moiety is linked to residue G182. A propeptide spans 183-204 (AADAITAGTGLMGAALAAVMLL) (removed in mature form).

In terms of processing, the GPI-anchor is attached to the protein in the endoplasmic reticulum and serves to target the protein to the cell surface. There, the glucosamine-inositol phospholipid moiety is cleaved off and the GPI-modified mannoprotein is covalently attached via its lipidless GPI glycan remnant to the 1,6-beta-glucan of the outer cell wall layer.

The protein resides in the secreted. It localises to the cell wall. It is found in the membrane. Functionally, involved in the uptake of non-siderophore and siderophore sources of iron. Has a role in the retention of iron in the cell wall and periplasmic space. This Saccharomyces cerevisiae (strain ATCC 204508 / S288c) (Baker's yeast) protein is Facilitator of iron transport 3 (FIT3).